Here is a 353-residue protein sequence, read N- to C-terminus: Alanine racemase (353 aa).

The Proton acceptor; specific for D-alanine role is filled by K33. N6-(pyridoxal phosphate)lysine is present on K33. Position 129 (R129) interacts with substrate. Y250 acts as the Proton acceptor; specific for L-alanine in catalysis. Position 298 (M298) interacts with substrate.

This sequence belongs to the alanine racemase family. Pyridoxal 5'-phosphate is required as a cofactor.

The enzyme catalyses L-alanine = D-alanine. It functions in the pathway amino-acid biosynthesis; D-alanine biosynthesis; D-alanine from L-alanine: step 1/1. In terms of biological role, catalyzes the interconversion of L-alanine and D-alanine. May also act on other amino acids. The chain is Alanine racemase (alr) from Azoarcus sp. (strain BH72).